A 265-amino-acid polypeptide reads, in one-letter code: Serine protease ami (265 aa).

Residues 1–21 (MNVSWALLAVVLVLTVATYEC) form the signal peptide. Asn-2 carries an N-linked (GlcNAc...) asparagine glycan. Positions 22-26 (RPRGR) are cleaved as a propeptide — activation peptide. The Peptidase S1 domain occupies 27 to 254 (ILGGQDSKAE…YKSWIMESMY (228 aa)). A disulfide bridge links Cys-52 with Cys-68. His-67 acts as the Charge relay system in catalysis. Asn-71, Asn-74, and Asn-108 each carry an N-linked (GlcNAc...) asparagine glycan. Asp-115 serves as the catalytic Charge relay system. 3 cysteine pairs are disulfide-bonded: Cys-149-Cys-215, Cys-180-Cys-196, and Cys-205-Cys-230. Residue Ser-209 is the Charge relay system of the active site. The N-linked (GlcNAc...) asparagine glycan is linked to Asn-255.

This sequence belongs to the peptidase S1 family.

It localises to the secreted. Probable serine protease. The polypeptide is Serine protease ami (Xenopus tropicalis (Western clawed frog)).